Here is a 134-residue protein sequence, read N- to C-terminus: Phosphomevalonate dehydratase small subunit (134 aa).

Ser-62 serves as the catalytic Proton acceptor.

It belongs to the AcnX type II small subunit family. Heterodimer composed of a large subunit (PMDh-L) and a small subunit (PMDh-S).

The catalysed reaction is (R)-5-phosphomevalonate = (2E)-3-methyl-5-phosphooxypent-2-enoate + H2O. Its pathway is isoprenoid biosynthesis; isopentenyl diphosphate biosynthesis via mevalonate pathway. Its function is as follows. Component of a hydro-lyase that catalyzes the dehydration of mevalonate 5-phosphate (MVA5P) to form trans-anhydromevalonate 5-phosphate (tAHMP). Involved in the archaeal mevalonate (MVA) pathway, which provides fundamental precursors for isoprenoid biosynthesis, such as isopentenyl diphosphate (IPP) and dimethylallyl diphosphate (DMAPP). The polypeptide is Phosphomevalonate dehydratase small subunit (Pyrococcus horikoshii (strain ATCC 700860 / DSM 12428 / JCM 9974 / NBRC 100139 / OT-3)).